The sequence spans 393 residues: Riboflavin biosynthesis protein RibBA (393 aa).

Positions 1–200 are DHBP synthase; sequence MEFDEIKDAL…IESLVNYQKD (200 aa). D-ribulose 5-phosphate-binding positions include 27–28, aspartate 32, 139–143, and glutamate 163; these read RE and RTGHT. Glutamate 28 is a binding site for Mg(2+). Histidine 142 lines the Mg(2+) pocket. The segment at 201-393 is GTP cyclohydrolase II; sequence KDTSVELKAK…TKKIKMGHLI (193 aa). 249–253 is a GTP binding site; sequence RIHSA. Residues cysteine 254, cysteine 265, and cysteine 267 each contribute to the Zn(2+) site. Residues glutamine 270, 291–293, and threonine 313 each bind GTP; that span reads EGR. Aspartate 325 serves as the catalytic Proton acceptor; for GTP cyclohydrolase activity. The active-site Nucleophile; for GTP cyclohydrolase activity is arginine 327. GTP contacts are provided by serine 348 and lysine 353.

The protein in the N-terminal section; belongs to the DHBP synthase family. This sequence in the C-terminal section; belongs to the GTP cyclohydrolase II family. Mg(2+) is required as a cofactor. Requires Mn(2+) as cofactor. Zn(2+) serves as cofactor.

It carries out the reaction D-ribulose 5-phosphate = (2S)-2-hydroxy-3-oxobutyl phosphate + formate + H(+). It catalyses the reaction GTP + 4 H2O = 2,5-diamino-6-hydroxy-4-(5-phosphoribosylamino)-pyrimidine + formate + 2 phosphate + 3 H(+). The protein operates within cofactor biosynthesis; riboflavin biosynthesis; 2-hydroxy-3-oxobutyl phosphate from D-ribulose 5-phosphate: step 1/1. It functions in the pathway cofactor biosynthesis; riboflavin biosynthesis; 5-amino-6-(D-ribitylamino)uracil from GTP: step 1/4. Its function is as follows. Catalyzes the conversion of D-ribulose 5-phosphate to formate and 3,4-dihydroxy-2-butanone 4-phosphate. Catalyzes the conversion of GTP to 2,5-diamino-6-ribosylamino-4(3H)-pyrimidinone 5'-phosphate (DARP), formate and pyrophosphate. This chain is Riboflavin biosynthesis protein RibBA, found in Staphylococcus haemolyticus (strain JCSC1435).